Here is a 166-residue protein sequence, read N- to C-terminus: Interferon gamma (166 aa).

Positions Met1–Cys23 are cleaved as a signal peptide. At Gln24 the chain carries Pyrrolidone carboxylic acid. Asn39, Asn106, and Asn107 each carry an N-linked (GlcNAc...) asparagine glycan.

Belongs to the type II (or gamma) interferon family. As to quaternary structure, homodimer. Interacts with IFNGR1 (via extracellular domain); this interaction promotes IFNGR1 dimerization.

Its subcellular location is the secreted. Type II interferon produced by immune cells such as T-cells and NK cells that plays crucial roles in antimicrobial, antiviral, and antitumor responses by activating effector immune cells and enhancing antigen presentation. Primarily signals through the JAK-STAT pathway after interaction with its receptor IFNGR1 to affect gene regulation. Upon IFNG binding, IFNGR1 intracellular domain opens out to allow association of downstream signaling components JAK2, JAK1 and STAT1, leading to STAT1 activation, nuclear translocation and transcription of IFNG-regulated genes. Many of the induced genes are transcription factors such as IRF1 that are able to further drive regulation of a next wave of transcription. Plays a role in class I antigen presentation pathway by inducing a replacement of catalytic proteasome subunits with immunoproteasome subunits. In turn, increases the quantity, quality, and repertoire of peptides for class I MHC loading. Increases the efficiency of peptide generation also by inducing the expression of activator PA28 that associates with the proteasome and alters its proteolytic cleavage preference. Up-regulates as well MHC II complexes on the cell surface by promoting expression of several key molecules such as cathepsins B/CTSB, H/CTSH, and L/CTSL. Participates in the regulation of hematopoietic stem cells during development and under homeostatic conditions by affecting their development, quiescence, and differentiation. This chain is Interferon gamma (IFNG), found in Mustela putorius furo (European domestic ferret).